The sequence spans 326 residues: Glyoxylate/hydroxypyruvate reductase B (326 aa).

Catalysis depends on residues Arg-237 and Glu-266. Catalysis depends on His-285, which acts as the Proton donor.

The protein belongs to the D-isomer specific 2-hydroxyacid dehydrogenase family. GhrB subfamily. As to quaternary structure, homodimer.

The protein localises to the cytoplasm. It carries out the reaction glycolate + NADP(+) = glyoxylate + NADPH + H(+). The enzyme catalyses (R)-glycerate + NAD(+) = 3-hydroxypyruvate + NADH + H(+). The catalysed reaction is (R)-glycerate + NADP(+) = 3-hydroxypyruvate + NADPH + H(+). Catalyzes the NADPH-dependent reduction of glyoxylate and hydroxypyruvate into glycolate and glycerate, respectively. In Yersinia pseudotuberculosis serotype O:1b (strain IP 31758), this protein is Glyoxylate/hydroxypyruvate reductase B.